Reading from the N-terminus, the 218-residue chain is N-(5'-phosphoribosyl)anthranilate isomerase (218 aa).

This sequence belongs to the TrpF family.

It carries out the reaction N-(5-phospho-beta-D-ribosyl)anthranilate = 1-(2-carboxyphenylamino)-1-deoxy-D-ribulose 5-phosphate. The protein operates within amino-acid biosynthesis; L-tryptophan biosynthesis; L-tryptophan from chorismate: step 3/5. The polypeptide is N-(5'-phosphoribosyl)anthranilate isomerase (Rhodopseudomonas palustris (strain BisA53)).